The primary structure comprises 308 residues: Cysteine proteinase 3 (308 aa).

The N-terminal stretch at 1–13 (MFALILFVSLACA) is a signal peptide. The propeptide at 14–92 (NEVAFKQWAA…TSNVKAAVKA (79 aa)) is activation peptide. 2 disulfide bridges follow: Cys-112/Cys-153 and Cys-146/Cys-186. Cys-115 is a catalytic residue. Active-site residues include His-251 and Asn-271.

It belongs to the peptidase C1 family.

The protein resides in the cytoplasm. It localises to the cytoplasmic vesicle. Its subcellular location is the phagosome. The enzyme catalyses Hydrolysis of proteins, including basement membrane collagen and azocasein. Preferential cleavage: Arg-Arg-|-Xaa in small molecule substrates including Z-Arg-Arg-|-NHMec.. In terms of biological role, cysteine protease which may be involved in pathogenicity. The protein is Cysteine proteinase 3 of Entamoeba histolytica (strain ATCC 30459 / HM-1:IMSS / ABRM).